A 104-amino-acid polypeptide reads, in one-letter code: Putative membrane protein insertion efficiency factor (104 aa).

A disordered region spans residues 83–104 (SSPTPLAESPDDRTVPHTQETS).

This sequence belongs to the UPF0161 family.

It is found in the cell inner membrane. Functionally, could be involved in insertion of integral membrane proteins into the membrane. In Chlamydia trachomatis serovar D (strain ATCC VR-885 / DSM 19411 / UW-3/Cx), this protein is Putative membrane protein insertion efficiency factor.